Consider the following 488-residue polypeptide: MTERKNLTTNQGTPVGDNQNSMTAGLKGPTLLEDYVLIEKLAHFDRERVPERVVHARGAGAHGKFVTKKSMKKYTIANFLQEEGTETEVFARFSTVIHGQHSPETLRDPRGFSVKFYTEEGNYDFVGNNLPVFFIRDAIKFPDVIHSLKPDPRTNIQDGNRYWDFFSLSPEATTMIMYLFSDEGTPASYREIRGSSVHAFKWINEEGKTVYVKLRWVPKAGIVNLSTEQAAQIQAKEFNHASRDLYEAIENGDYPEWDLYVQVLDPKDLDSFDFNPLDATKDWFEDVFPYEHVGTMTLNRNPDNIFAETESVGFNPGVLVRGMLPSEDRLLQGRLFSYSDTQRHRVGPNYLQLPINSPKAPVANNQRDGYMPFKQQTSSINYEPNSYETEPKENPAFIEQEQEIRGDISGRLIAEKPNNFGHAKEVWDRYSDAERAALVKNIVDDWSGVRDDIKIRNLRNFYQIEPEFANRVADGTGINLEEHVADLK.

The disordered stretch occupies residues 1-24 (MTERKNLTTNQGTPVGDNQNSMTA). Over residues 7-23 (LTTNQGTPVGDNQNSMT) the composition is skewed to polar residues. Catalysis depends on residues histidine 55 and asparagine 128. Tyrosine 338 is a binding site for heme.

Belongs to the catalase family. Heme serves as cofactor.

It localises to the cytoplasm. It carries out the reaction 2 H2O2 = O2 + 2 H2O. In terms of biological role, decomposes hydrogen peroxide into water and oxygen; serves to protect cells from the toxic effects of hydrogen peroxide. The protein is Catalase (kat) of Listeria innocua serovar 6a (strain ATCC BAA-680 / CLIP 11262).